A 1013-amino-acid polypeptide reads, in one-letter code: Chitin synthase A (1013 aa).

Asn10 carries N-linked (GlcNAc...) asparagine glycosylation. Disordered regions lie at residues 26 to 83 (RYSY…AADW) and 95 to 218 (ERAD…RRGV). A compositionally biased stretch (low complexity) spans 64–81 (TASRPASPARPWSPTRAA). The segment covering 154–173 (TISSRHGPQGSVQSFTSEST) has biased composition (polar residues). N-linked (GlcNAc...) asparagine glycans are attached at residues Asn194 and Asn316. 5 consecutive transmembrane segments (helical) span residues 646–666 (LLQL…FFFI), 686–706 (IFIV…IFSM), 721–741 (MIVY…LIVL), 759–779 (LFVN…FTSF), and 792–811 (AQYF…YAFC). Residue Asn837 is glycosylated (N-linked (GlcNAc...) asparagine). 2 helical membrane passes run 892–912 (VSVW…VYGV) and 919–939 (VYLA…AIGS). Asn967, Asn980, Asn989, and Asn995 each carry an N-linked (GlcNAc...) asparagine glycan.

It belongs to the chitin synthase family. Class II subfamily. Mainly expressed in the metulae, phialides, and conidia.

It localises to the cell membrane. The protein resides in the cell septum. It carries out the reaction [(1-&gt;4)-N-acetyl-beta-D-glucosaminyl](n) + UDP-N-acetyl-alpha-D-glucosamine = [(1-&gt;4)-N-acetyl-beta-D-glucosaminyl](n+1) + UDP + H(+). Polymerizes chitin, a structural polymer of the cell wall and septum, by transferring the sugar moiety of UDP-GlcNAc to the non-reducing end of the growing chitin polymer. Seems not to be involved in hyphal growth, but, with chsC, chsA shares critical functions in hyphal wall integrity and differentiation. ChsA and chsC share also overlapping roles in septum formation. Invoved in the production of the asexual spores (conidia) that are formed by differentiated aerial hyphae called conidiophores. The polypeptide is Chitin synthase A (Emericella nidulans (strain FGSC A4 / ATCC 38163 / CBS 112.46 / NRRL 194 / M139) (Aspergillus nidulans)).